Reading from the N-terminus, the 1085-residue chain is DNA repair and recombination protein RAD26 (1085 aa).

Serine 30 bears the Phosphoserine mark. Disordered stretches follow at residues 118–141 (KEQV…GETE) and 190–219 (NLTD…EEND). Residues 128 to 141 (KGSKEGLQRPGETE) show a composition bias toward basic and acidic residues. Over residues 210–219 (SEDDEEEEND) the composition is skewed to acidic residues. The 210-residue stretch at 309–518 (YELYQQNCGG…WSLFDFIFPG (210 aa)) folds into the Helicase ATP-binding domain. An ATP-binding site is contributed by 322-329 (DEMGLGKT). The DEGH box signature appears at 469-472 (DEGH). Residues 655–818 (VVKQLLLLWH…KRFFKIHELH (164 aa)) enclose the Helicase C-terminal domain.

The protein belongs to the SNF2/RAD54 helicase family.

The protein resides in the nucleus. The enzyme catalyses ATP + H2O = ADP + phosphate + H(+). In terms of biological role, may be involved in the preferential repair of active genes. In Saccharomyces cerevisiae (strain ATCC 204508 / S288c) (Baker's yeast), this protein is DNA repair and recombination protein RAD26 (RAD26).